A 905-amino-acid chain; its full sequence is DNA gyrase subunit A (905 aa).

The 490-residue stretch at 35-524 (IPDVRDGLKP…GEFDQDIEDL (490 aa)) folds into the Topo IIA-type catalytic domain. Tyr-123 acts as the O-(5'-phospho-DNA)-tyrosine intermediate in catalysis. The GyrA-box signature appears at 551–557 (QKRGGKG).

Belongs to the type II topoisomerase GyrA/ParC subunit family. As to quaternary structure, heterotetramer, composed of two GyrA and two GyrB chains. In the heterotetramer, GyrA contains the active site tyrosine that forms a transient covalent intermediate with DNA, while GyrB binds cofactors and catalyzes ATP hydrolysis.

The protein resides in the cytoplasm. The enzyme catalyses ATP-dependent breakage, passage and rejoining of double-stranded DNA.. Its function is as follows. A type II topoisomerase that negatively supercoils closed circular double-stranded (ds) DNA in an ATP-dependent manner to modulate DNA topology and maintain chromosomes in an underwound state. Negative supercoiling favors strand separation, and DNA replication, transcription, recombination and repair, all of which involve strand separation. Also able to catalyze the interconversion of other topological isomers of dsDNA rings, including catenanes and knotted rings. Type II topoisomerases break and join 2 DNA strands simultaneously in an ATP-dependent manner. This chain is DNA gyrase subunit A, found in Rickettsia typhi (strain ATCC VR-144 / Wilmington).